The following is a 333-amino-acid chain: Acetyl-coenzyme A carboxylase carboxyl transferase subunit alpha (333 aa).

The 261-residue stretch at 48–308 (ALEVKVETLR…KEMLIEELRI (261 aa)) folds into the CoA carboxyltransferase C-terminal domain.

It belongs to the AccA family. As to quaternary structure, acetyl-CoA carboxylase is a heterohexamer composed of biotin carboxyl carrier protein (AccB), biotin carboxylase (AccC) and two subunits each of ACCase subunit alpha (AccA) and ACCase subunit beta (AccD).

The protein localises to the cytoplasm. It catalyses the reaction N(6)-carboxybiotinyl-L-lysyl-[protein] + acetyl-CoA = N(6)-biotinyl-L-lysyl-[protein] + malonyl-CoA. It participates in lipid metabolism; malonyl-CoA biosynthesis; malonyl-CoA from acetyl-CoA: step 1/1. Its function is as follows. Component of the acetyl coenzyme A carboxylase (ACC) complex. First, biotin carboxylase catalyzes the carboxylation of biotin on its carrier protein (BCCP) and then the CO(2) group is transferred by the carboxyltransferase to acetyl-CoA to form malonyl-CoA. The chain is Acetyl-coenzyme A carboxylase carboxyl transferase subunit alpha from Chlorobium phaeobacteroides (strain DSM 266 / SMG 266 / 2430).